A 250-amino-acid chain; its full sequence is Serine/arginine-rich splicing factor RS31A (250 aa).

2 RRM domains span residues 2–74 (RHVY…WAKD) and 95–166 (KTLF…YALR). The disordered stretch occupies residues 170-250 (EREDRYAGSR…SRSPIQRARG (81 aa)). A compositionally biased stretch (basic residues) spans 177–191 (GSRRRRSPSPVYRRR). Phosphoserine is present on residues Ser-183, Ser-185, Ser-201, Ser-218, and Ser-243. Residues 192–230 (PSPDYTRRRSPEYDRYKGPAPYERRKSPDYGRRSSDYGR) are compositionally biased toward basic and acidic residues.

The protein belongs to the splicing factor SR family. RS subfamily. Component of the spliceosome. Interacts with MOS14.

The protein localises to the nucleus speckle. It is found in the nucleus. It localises to the nucleoplasm. Functionally, probably involved in intron recognition and spliceosome assembly. The sequence is that of Serine/arginine-rich splicing factor RS31A (RS31A) from Arabidopsis thaliana (Mouse-ear cress).